We begin with the raw amino-acid sequence, 141 residues long: Hemoglobin subunit alpha (141 aa).

The region spanning 1 to 141 (VLSSTDKSNV…VSTVLTSKYR (141 aa)) is the Globin domain. Residue Ser3 is modified to Phosphoserine. Residues Lys7 and Lys11 each carry the N6-succinyllysine modification. Lys16 carries the N6-acetyllysine; alternate modification. Lys16 is modified (N6-succinyllysine; alternate). Residue Tyr24 is modified to Phosphotyrosine. Ser35 carries the phosphoserine modification. An N6-succinyllysine modification is found at Lys40. His58 lines the O2 pocket. Position 87 (His87) interacts with heme b. Ser102 is subject to Phosphoserine. Thr108 is modified (phosphothreonine). A phosphoserine mark is found at Ser124 and Ser131. Residues Thr134 and Thr137 each carry the phosphothreonine modification. Residue Ser138 is modified to Phosphoserine.

Belongs to the globin family. As to quaternary structure, heterotetramer of two alpha chains and two beta chains. As to expression, red blood cells.

In terms of biological role, involved in oxygen transport from the lung to the various peripheral tissues. Its function is as follows. Hemopressin acts as an antagonist peptide of the cannabinoid receptor CNR1. Hemopressin-binding efficiently blocks cannabinoid receptor CNR1 and subsequent signaling. The chain is Hemoglobin subunit alpha from Pteropus vampyrus (Large flying fox).